Reading from the N-terminus, the 382-residue chain is MNSLQVLTKKVLIETKAFSKYHEDDIFILQQLGLWWEIGPIGFCKQCKMVTGGSMSCSDVDSYELDRALVKAVKENQTDLIKIFVSWGAEINFGIMCAKTKQTKDLCIQLGADPEFLDVGLYNMFVYLIKQKKVLLAIDIYYDNISILDSFDSHDFHVLIDFVYNRFILYLDEKEEEMTRNTLVLKFWYKFAIDFKLTKPIRYLSKKFPHLDIWRLQTAIYLGNIDEVHHAYFQEDIRLSLNVMMFLACARPGNKLGIYYCFALGADLDRALERLISFNSINRKISGETRLCIEGSYLSNVYFCIGLGANPYTKKIQETIKQKHSNIMILLFSKKKILSPHSVLQNKILDPSDVRKMISTYENTESFYPFFSLAVKLIQQAK.

It belongs to the asfivirus MGF 360 family.

Functionally, plays a role in virus cell tropism, and may be required for efficient virus replication in macrophages. This is Protein MGF 360-4L from Ornithodoros (relapsing fever ticks).